Reading from the N-terminus, the 275-residue chain is 2,3,4,5-tetrahydropyridine-2,6-dicarboxylate N-succinyltransferase (275 aa).

The substrate site is built by arginine 108 and aspartate 145.

The protein belongs to the transferase hexapeptide repeat family. In terms of assembly, homotrimer.

It localises to the cytoplasm. The catalysed reaction is (S)-2,3,4,5-tetrahydrodipicolinate + succinyl-CoA + H2O = (S)-2-succinylamino-6-oxoheptanedioate + CoA. The protein operates within amino-acid biosynthesis; L-lysine biosynthesis via DAP pathway; LL-2,6-diaminopimelate from (S)-tetrahydrodipicolinate (succinylase route): step 1/3. The chain is 2,3,4,5-tetrahydropyridine-2,6-dicarboxylate N-succinyltransferase from Jannaschia sp. (strain CCS1).